Consider the following 646-residue polypeptide: UvrABC system protein B (646 aa).

Residues 29–411 (LEKNPEKSKQ…SNQVVEQIIR (383 aa)) form the Helicase ATP-binding domain. ATP is bound at residue 42–49 (GVTGSGKT). The Beta-hairpin signature appears at 95–118 (YYDYYQPESYIPQKDQYIEKDAQI). Residues 428 to 590 (QVEDIIKETE…ITPQTIVKPI (163 aa)) form the Helicase C-terminal domain. The UVR domain maps to 609-644 (PNVIVELEAEMYEAAEALEFEKAIKIRDTIAKLKKK).

It belongs to the UvrB family. In terms of assembly, forms a heterotetramer with UvrA during the search for lesions. Interacts with UvrC in an incision complex.

It localises to the cytoplasm. The UvrABC repair system catalyzes the recognition and processing of DNA lesions. A damage recognition complex composed of 2 UvrA and 2 UvrB subunits scans DNA for abnormalities. Upon binding of the UvrA(2)B(2) complex to a putative damaged site, the DNA wraps around one UvrB monomer. DNA wrap is dependent on ATP binding by UvrB and probably causes local melting of the DNA helix, facilitating insertion of UvrB beta-hairpin between the DNA strands. Then UvrB probes one DNA strand for the presence of a lesion. If a lesion is found the UvrA subunits dissociate and the UvrB-DNA preincision complex is formed. This complex is subsequently bound by UvrC and the second UvrB is released. If no lesion is found, the DNA wraps around the other UvrB subunit that will check the other stand for damage. This chain is UvrABC system protein B, found in Methanococcus maripaludis (strain DSM 14266 / JCM 13030 / NBRC 101832 / S2 / LL).